The chain runs to 92 residues: DNA-binding protein HU (92 aa).

The protein belongs to the bacterial histone-like protein family. In terms of assembly, homodimer.

Its function is as follows. Histone-like DNA-binding protein which is capable of wrapping DNA to stabilize it, and thus to prevent its denaturation under extreme environmental conditions. The sequence is that of DNA-binding protein HU (hup) from Buchnera aphidicola subsp. Baizongia pistaciae (strain Bp).